Consider the following 148-residue polypeptide: NADH-quinone oxidoreductase subunit A (148 aa).

3 helical membrane-spanning segments follow: residues 14–34, 68–88, and 98–118; these read WAFA…LVGG, FYLV…LYAW, and VGFV…VYLV.

The protein belongs to the complex I subunit 3 family. As to quaternary structure, NDH-1 is composed of 13 different subunits. Subunits NuoA, H, J, K, L, M, N constitute the membrane sector of the complex.

It is found in the cell inner membrane. It catalyses the reaction a quinone + NADH + 5 H(+)(in) = a quinol + NAD(+) + 4 H(+)(out). In terms of biological role, NDH-1 shuttles electrons from NADH, via FMN and iron-sulfur (Fe-S) centers, to quinones in the respiratory chain. The immediate electron acceptor for the enzyme in this species is believed to be ubiquinone. Couples the redox reaction to proton translocation (for every two electrons transferred, four hydrogen ions are translocated across the cytoplasmic membrane), and thus conserves the redox energy in a proton gradient. This is NADH-quinone oxidoreductase subunit A from Klebsiella pneumoniae subsp. pneumoniae (strain ATCC 700721 / MGH 78578).